A 700-amino-acid polypeptide reads, in one-letter code: Auxin response factor 18 (700 aa).

The segment at residues Phe128–Lys230 is a DNA-binding region (TF-B3). Disordered regions lie at residues Val234–Gly254 and Val560–Ser595. The segment covering Phe239–Pro250 has biased composition (pro residues). The segment covering Ser565 to Leu594 has biased composition (polar residues). Residues Thr614–Asn697 enclose the PB1 domain.

The protein belongs to the ARF family. In terms of assembly, homodimers and heterodimers. In terms of tissue distribution, expressed in roots, culms, leaves and young panicles.

It localises to the nucleus. Functionally, auxin response factors (ARFs) are transcriptional factors that bind specifically to the DNA sequence 5'-TGTCTC-3' found in the auxin-responsive promoter elements (AuxREs). The protein is Auxin response factor 18 (ARF18) of Oryza sativa subsp. japonica (Rice).